A 360-amino-acid polypeptide reads, in one-letter code: Peptide chain release factor 1 (360 aa).

Gln234 is modified (N5-methylglutamine).

Belongs to the prokaryotic/mitochondrial release factor family. Post-translationally, methylated by PrmC. Methylation increases the termination efficiency of RF1.

It is found in the cytoplasm. Peptide chain release factor 1 directs the termination of translation in response to the peptide chain termination codons UAG and UAA. In Clostridium perfringens (strain 13 / Type A), this protein is Peptide chain release factor 1.